A 479-amino-acid polypeptide reads, in one-letter code: Dihydrolipoyl dehydrogenase (479 aa).

Residues 41–50 (EKRGALGGTC), K59, A124, and 153–155 (TGS) each bind FAD. A disulfide bond links C50 and C55. NAD(+) is bound by residues 190–197 (GGGVIGLE), E213, I247, and G284. FAD contacts are provided by residues D325 and 332 to 335 (MLAH). The active-site Proton acceptor is the H458.

It belongs to the class-I pyridine nucleotide-disulfide oxidoreductase family. Homodimer. Requires FAD as cofactor.

It catalyses the reaction N(6)-[(R)-dihydrolipoyl]-L-lysyl-[protein] + NAD(+) = N(6)-[(R)-lipoyl]-L-lysyl-[protein] + NADH + H(+). The protein is Dihydrolipoyl dehydrogenase of Trypanosoma brucei brucei.